The following is a 493-amino-acid chain: Glutamyl-tRNA(Gln) amidotransferase subunit A (493 aa).

Residues Lys79 and Ser159 each act as charge relay system in the active site. Catalysis depends on Ser183, which acts as the Acyl-ester intermediate.

This sequence belongs to the amidase family. GatA subfamily. Heterotrimer of A, B and C subunits.

It catalyses the reaction L-glutamyl-tRNA(Gln) + L-glutamine + ATP + H2O = L-glutaminyl-tRNA(Gln) + L-glutamate + ADP + phosphate + H(+). Allows the formation of correctly charged Gln-tRNA(Gln) through the transamidation of misacylated Glu-tRNA(Gln) in organisms which lack glutaminyl-tRNA synthetase. The reaction takes place in the presence of glutamine and ATP through an activated gamma-phospho-Glu-tRNA(Gln). This Brucella suis biovar 1 (strain 1330) protein is Glutamyl-tRNA(Gln) amidotransferase subunit A.